The chain runs to 336 residues: UDP-3-O-acylglucosamine N-acyltransferase (336 aa).

His-237 acts as the Proton acceptor in catalysis.

This sequence belongs to the transferase hexapeptide repeat family. LpxD subfamily. Homotrimer.

It carries out the reaction a UDP-3-O-[(3R)-3-hydroxyacyl]-alpha-D-glucosamine + a (3R)-hydroxyacyl-[ACP] = a UDP-2-N,3-O-bis[(3R)-3-hydroxyacyl]-alpha-D-glucosamine + holo-[ACP] + H(+). It functions in the pathway bacterial outer membrane biogenesis; LPS lipid A biosynthesis. In terms of biological role, catalyzes the N-acylation of UDP-3-O-acylglucosamine using 3-hydroxyacyl-ACP as the acyl donor. Is involved in the biosynthesis of lipid A, a phosphorylated glycolipid that anchors the lipopolysaccharide to the outer membrane of the cell. The protein is UDP-3-O-acylglucosamine N-acyltransferase of Alcanivorax borkumensis (strain ATCC 700651 / DSM 11573 / NCIMB 13689 / SK2).